The primary structure comprises 60 residues: Short neurotoxin 1 (60 aa).

4 disulfide bridges follow: Cys3–Cys22, Cys17–Cys39, Cys41–Cys52, and Cys53–Cys58.

This sequence belongs to the three-finger toxin family. Short-chain subfamily. Type I alpha-neurotoxin sub-subfamily. In terms of tissue distribution, expressed by the venom gland.

Its subcellular location is the secreted. In terms of biological role, binds to muscle nicotinic acetylcholine receptor (nAChR) and inhibit acetylcholine from binding to the receptor, thereby impairing neuromuscular transmission. This is Short neurotoxin 1 from Hydrophis schistosus (Beaked sea snake).